The chain runs to 331 residues: MVREEIAVSTRTLQWKCVESRADSKRLYYGRFVLSPLMKGQADTIGIAMRRALLGEIEGTCITRAKSEKVPHEYSTIVGIEESVHEILMNLKEIVFRSHLYGTRGASICVRGPRYVTAQDIISPPSVKIVDTTQYIASLTEPIDLCIELQIERDRGYRIKTPNNYQDGSYPIDAVSMPVRNANHSIHSYGNGNEKQEILFLEIWTNGSFTPKEALYEASRNLIDLFLPFLHAEEQDINVEDNQNRATAPLFTFHDGLTNIGKRKKGIALKRVFIDQSELPTRTYNCLKRSNIHTLLDLLSNSQEDLMRIEHFRIEDVKQILGILQKRFAID.

The tract at residues 1-233 is alpha N-terminal domain (alpha-NTD); the sequence is MVREEIAVST…DLFLPFLHAE (233 aa). The tract at residues 268–331 is alpha C-terminal domain (alpha-CTD); the sequence is ALKRVFIDQS…GILQKRFAID (64 aa).

This sequence belongs to the RNA polymerase alpha chain family. In plastids the minimal PEP RNA polymerase catalytic core is composed of four subunits: alpha, beta, beta', and beta''. When a (nuclear-encoded) sigma factor is associated with the core the holoenzyme is formed, which can initiate transcription.

It is found in the plastid. Its subcellular location is the chloroplast. It catalyses the reaction RNA(n) + a ribonucleoside 5'-triphosphate = RNA(n+1) + diphosphate. Its function is as follows. DNA-dependent RNA polymerase catalyzes the transcription of DNA into RNA using the four ribonucleoside triphosphates as substrates. The protein is DNA-directed RNA polymerase subunit alpha of Illicium oligandrum (Star anise).